A 101-amino-acid polypeptide reads, in one-letter code: Synaptobrevin-B (101 aa).

The Cytoplasmic segment spans residues 1 to 76; sequence MSNNPNNSGQ…RRQMWCRNMK (76 aa). A v-SNARE coiled-coil homology domain is found at 13–73; it reads KTQSILQEVD…VTIRRQMWCR (61 aa). A helical; Anchor for type IV membrane protein transmembrane segment spans residues 77–97; the sequence is LQLIIIAVVILVLAVILIPII. Over 98–101 the chain is Vesicular; that stretch reads MKFV.

It belongs to the synaptobrevin family.

The protein localises to the cytoplasmic vesicle. Its subcellular location is the secretory vesicle membrane. Its function is as follows. Involved in the targeting and/or fusion of transport vesicles to their target membrane. This Dictyostelium discoideum (Social amoeba) protein is Synaptobrevin-B (sybB).